A 267-amino-acid chain; its full sequence is Phosphate import ATP-binding protein PstB (267 aa).

The region spanning 21–262 (IAIRNLEFYY…PSKQQTEDYI (242 aa)) is the ABC transporter domain. 53-60 (GPSGCGKS) contacts ATP.

The protein belongs to the ABC transporter superfamily. Phosphate importer (TC 3.A.1.7) family. As to quaternary structure, the complex is composed of two ATP-binding proteins (PstB), two transmembrane proteins (PstC and PstA) and a solute-binding protein (PstS).

It is found in the cell inner membrane. It carries out the reaction phosphate(out) + ATP + H2O = ADP + 2 phosphate(in) + H(+). Part of the ABC transporter complex PstSACB involved in phosphate import. Responsible for energy coupling to the transport system. The protein is Phosphate import ATP-binding protein PstB of Xylella fastidiosa (strain 9a5c).